The chain runs to 459 residues: Cysteine--tRNA ligase (459 aa).

Zn(2+) is bound at residue Cys-31. The short motif at 33 to 43 is the 'HIGH' region element; that stretch reads PTVYDNPHIGN. Residues Cys-216, His-241, and Glu-245 each contribute to the Zn(2+) site. The short motif at 274–278 is the 'KMSKS' region element; it reads KMSKS. Lys-277 serves as a coordination point for ATP.

It belongs to the class-I aminoacyl-tRNA synthetase family. As to quaternary structure, monomer. Zn(2+) serves as cofactor.

Its subcellular location is the cytoplasm. The enzyme catalyses tRNA(Cys) + L-cysteine + ATP = L-cysteinyl-tRNA(Cys) + AMP + diphosphate. The chain is Cysteine--tRNA ligase from Rickettsia canadensis (strain McKiel).